The chain runs to 147 residues: NADPH-dependent 7-cyano-7-deazaguanine reductase (147 aa).

Positions 1–23 (MQTTHLGKNSPIPQSPEEASLDY) are disordered. Cysteine 46 acts as the Thioimide intermediate in catalysis. Aspartate 53 (proton donor) is an active-site residue. Residues 68-70 (VES) and 87-88 (HE) each bind substrate.

The protein belongs to the GTP cyclohydrolase I family. QueF type 1 subfamily.

The protein localises to the cytoplasm. The catalysed reaction is 7-aminomethyl-7-carbaguanine + 2 NADP(+) = 7-cyano-7-deazaguanine + 2 NADPH + 3 H(+). It functions in the pathway tRNA modification; tRNA-queuosine biosynthesis. Its function is as follows. Catalyzes the NADPH-dependent reduction of 7-cyano-7-deazaguanine (preQ0) to 7-aminomethyl-7-deazaguanine (preQ1). The polypeptide is NADPH-dependent 7-cyano-7-deazaguanine reductase (Zymomonas mobilis subsp. mobilis (strain ATCC 31821 / ZM4 / CP4)).